Here is a 288-residue protein sequence, read N- to C-terminus: 2-hydroxy-6-oxononadienedioate/2-hydroxy-6-oxononatrienedioate hydrolase (288 aa).

The AB hydrolase-1 domain maps to 38–274; that stretch reads ALVLLHGSGP…RCGHWAQWEH (237 aa). The active-site Proton acceptor is the H268.

The protein belongs to the AB hydrolase superfamily. MhpC family. As to quaternary structure, homodimer.

It carries out the reaction (2Z,4E)-2-hydroxy-6-oxonona-2,4-dienedioate + H2O = (2Z)-2-hydroxypenta-2,4-dienoate + succinate + H(+). The enzyme catalyses (2Z,4E,7E)-2-hydroxy-6-oxonona-2,4,7-trienedioate + H2O = (2Z)-2-hydroxypenta-2,4-dienoate + fumarate + H(+). Its pathway is aromatic compound metabolism; 3-phenylpropanoate degradation. Its function is as follows. Catalyzes the cleavage of the C5-C6 bond of 2-hydroxy-6-oxononadienedioate and 2-hydroxy-6-oxononatrienedioate, a dienol ring fission product of the bacterial meta-cleavage pathway for degradation of phenylpropionic acid. In Burkholderia vietnamiensis (strain G4 / LMG 22486) (Burkholderia cepacia (strain R1808)), this protein is 2-hydroxy-6-oxononadienedioate/2-hydroxy-6-oxononatrienedioate hydrolase.